A 465-amino-acid polypeptide reads, in one-letter code: Ribosomal oxygenase 2 (465 aa).

Residues 139–271 (QPQRFKDELW…NSWGDFLLDT (133 aa)) enclose the JmjC domain. Fe cation is bound by residues histidine 179, aspartate 181, and histidine 240. A Phosphoserine modification is found at serine 309.

Belongs to the ROX family. MINA53 subfamily. Fe(2+) serves as cofactor.

Its subcellular location is the nucleus. The protein resides in the nucleolus. It catalyses the reaction L-histidyl-[ribosomal protein uL15] + 2-oxoglutarate + O2 = (3S)-3-hydroxy-L-histidyl-[ribosomal protein uL15] + succinate + CO2. It carries out the reaction L-histidyl-[protein] + 2-oxoglutarate + O2 = (3S)-3-hydroxy-L-histidyl-[protein] + succinate + CO2. Functionally, oxygenase that can act as both a histone lysine demethylase and a ribosomal histidine hydroxylase. Is involved in the demethylation of trimethylated 'Lys-9' on histone H3 (H3K9me3), leading to an increase in ribosomal RNA expression. Also catalyzes the hydroxylation of 60S ribosomal protein L27a on 'His-39'. May play an important role in cell growth and survival. May be involved in ribosome biogenesis, most likely during the assembly process of pre-ribosomal particles. This chain is Ribosomal oxygenase 2 (RIOX2), found in Pongo abelii (Sumatran orangutan).